The following is a 264-amino-acid chain: Thymidylate synthase (264 aa).

Arg-21 is a dUMP binding site. His-51 contributes to the (6R)-5,10-methylene-5,6,7,8-tetrahydrofolate binding site. A dUMP-binding site is contributed by 126–127 (RR). The Nucleophile role is filled by Cys-146. Residues 166-169 (RSAD), Asn-177, and 207-209 (HLY) each bind dUMP. Asp-169 contributes to the (6R)-5,10-methylene-5,6,7,8-tetrahydrofolate binding site. Ala-263 is a binding site for (6R)-5,10-methylene-5,6,7,8-tetrahydrofolate.

It belongs to the thymidylate synthase family. Bacterial-type ThyA subfamily. In terms of assembly, homodimer.

The protein resides in the cytoplasm. The enzyme catalyses dUMP + (6R)-5,10-methylene-5,6,7,8-tetrahydrofolate = 7,8-dihydrofolate + dTMP. It functions in the pathway pyrimidine metabolism; dTTP biosynthesis. Catalyzes the reductive methylation of 2'-deoxyuridine-5'-monophosphate (dUMP) to 2'-deoxythymidine-5'-monophosphate (dTMP) while utilizing 5,10-methylenetetrahydrofolate (mTHF) as the methyl donor and reductant in the reaction, yielding dihydrofolate (DHF) as a by-product. This enzymatic reaction provides an intracellular de novo source of dTMP, an essential precursor for DNA biosynthesis. This is Thymidylate synthase from Bdellovibrio bacteriovorus (strain ATCC 15356 / DSM 50701 / NCIMB 9529 / HD100).